We begin with the raw amino-acid sequence, 691 residues long: Pentatricopeptide repeat-containing protein At4g37170 (691 aa).

12 PPR repeats span residues 84–118 (PAST…GFVP), 119–149 (GIVI…MPNR), 150–184 (DLCS…DSYS), 185–211 (WTAM…MQRV), 217–251 (NIFT…GLDS), 252–286 (DEVL…DVVS), 287–317 (WTSM…CERP), 318–352 (NEYT…GFDP), 353–383 (YSFA…CPKP), 384–418 (DLVS…GTKP), 419–449 (DHVT…ITEK), and 455–485 (TSDH…MPMK). The tract at residues 490–565 (LWASVLGGCS…RPGSSWTEIK (76 aa)) is type E motif. Positions 566-596 (RKRHVFIAADTSHPMYNQIVEFLRELRKKMK) are type E(+) motif. The tract at residues 597 to 691 (EEGYVPATSL…NGQCSCGDYW (95 aa)) is type DYW motif.

It belongs to the PPR family. PCMP-H subfamily.

The sequence is that of Pentatricopeptide repeat-containing protein At4g37170 (PCMP-H5) from Arabidopsis thaliana (Mouse-ear cress).